A 333-amino-acid polypeptide reads, in one-letter code: T-cell surface glycoprotein CD1b-2 (333 aa).

Residues 1–20 (MLLLPLLLLGVILPGGDNED) form the signal peptide. Topologically, residues 21–302 (VFQGPTSFHL…LYWGHPTSIG (282 aa)) are extracellular. N38, N75, and N146 each carry an N-linked (GlcNAc...) asparagine glycan. Intrachain disulfides connect C120–C184, C149–C163, and C224–C279. Positions 185–295 (PRYLLGVLDA…LGDQDIILYW (111 aa)) constitute an Ig-like domain. Residues 303–323 (LILVAIIVPSLILSICLALWF) traverse the membrane as a helical segment. Residues 324-333 (WRRWSYQNIL) lie on the Cytoplasmic side of the membrane. The Internalization signal motif lies at 329–332 (YQNI).

In terms of assembly, heterodimer with B2M (beta-2-microglobulin). Interacts with saposin C.

It localises to the cell membrane. It is found in the endosome membrane. Its subcellular location is the lysosome membrane. Antigen-presenting protein that binds self and non-self lipid and glycolipid antigens and presents them to T-cell receptors on natural killer T-cells. This is T-cell surface glycoprotein CD1b-2 from Ovis aries (Sheep).